The following is a 163-amino-acid chain: Putative 4-hydroxy-4-methyl-2-oxoglutarate aldolase (163 aa).

Substrate contacts are provided by residues 76–79 and R98; that span reads GDML. Residue D99 coordinates a divalent metal cation.

This sequence belongs to the class II aldolase/RraA-like family. Homotrimer. The cofactor is a divalent metal cation.

It carries out the reaction 4-hydroxy-4-methyl-2-oxoglutarate = 2 pyruvate. The catalysed reaction is oxaloacetate + H(+) = pyruvate + CO2. Catalyzes the aldol cleavage of 4-hydroxy-4-methyl-2-oxoglutarate (HMG) into 2 molecules of pyruvate. Also contains a secondary oxaloacetate (OAA) decarboxylase activity due to the common pyruvate enolate transition state formed following C-C bond cleavage in the retro-aldol and decarboxylation reactions. The polypeptide is Putative 4-hydroxy-4-methyl-2-oxoglutarate aldolase (Pseudomonas putida (strain GB-1)).